A 496-amino-acid chain; its full sequence is Glutamyl-tRNA(Gln) amidotransferase subunit A (496 aa).

Catalysis depends on charge relay system residues K75 and S150. The active-site Acyl-ester intermediate is the S174.

This sequence belongs to the amidase family. GatA subfamily. In terms of assembly, heterotrimer of A, B and C subunits.

The enzyme catalyses L-glutamyl-tRNA(Gln) + L-glutamine + ATP + H2O = L-glutaminyl-tRNA(Gln) + L-glutamate + ADP + phosphate + H(+). Allows the formation of correctly charged Gln-tRNA(Gln) through the transamidation of misacylated Glu-tRNA(Gln) in organisms which lack glutaminyl-tRNA synthetase. The reaction takes place in the presence of glutamine and ATP through an activated gamma-phospho-Glu-tRNA(Gln). This Burkholderia thailandensis (strain ATCC 700388 / DSM 13276 / CCUG 48851 / CIP 106301 / E264) protein is Glutamyl-tRNA(Gln) amidotransferase subunit A.